A 458-amino-acid polypeptide reads, in one-letter code: NADH-ubiquinone oxidoreductase chain 4 (458 aa).

A run of 12 helical transmembrane segments spans residues 21–43, 58–78, 93–112, 116–138, 145–165, 196–216, 224–244, 257–277, 285–305, 309–329, 341–361, and 379–399; these read ASLW…QWLN, IDQI…LMLL, RTFI…AFSA, TLFY…RWGN, AGIY…VTIL, GLAL…HLWL, PIAG…YGIM, LSYP…SICL, LIAY…MIQT, FSGA…LFCL, ILLL…WWLL, and LTIM…TGLA.

Belongs to the complex I subunit 4 family.

Its subcellular location is the mitochondrion membrane. It catalyses the reaction a ubiquinone + NADH + 5 H(+)(in) = a ubiquinol + NAD(+) + 4 H(+)(out). In terms of biological role, core subunit of the mitochondrial membrane respiratory chain NADH dehydrogenase (Complex I) that is believed to belong to the minimal assembly required for catalysis. Complex I functions in the transfer of electrons from NADH to the respiratory chain. The immediate electron acceptor for the enzyme is believed to be ubiquinone. The polypeptide is NADH-ubiquinone oxidoreductase chain 4 (MT-ND4) (Struthio camelus (Common ostrich)).